Consider the following 198-residue polypeptide: MNNIFSKLRDFVGLNEQVEYEYYEEEADTDNYQNLYQQENPQPAPAEAAPNNRRWREPMTTMGDDVATGTKSAMGNVIGMPGAINGISEVLVLEPRTFEEMPQAIQALRERKSVVLNLTIMDPDQAQRAVDFVAGGTYALDGHQERIGESIFLFTPSCVQVSTQGGVIHEVPQPPARPARPASTNPPAWGNETNRMAQ.

The segment at 170-198 (EVPQPPARPARPASTNPPAWGNETNRMAQ) is disordered. The span at 179 to 188 (ARPASTNPPA) shows a compositional bias: low complexity.

The protein belongs to the SepF family. As to quaternary structure, homodimer. Interacts with FtsZ.

Its subcellular location is the cytoplasm. In terms of biological role, cell division protein that is part of the divisome complex and is recruited early to the Z-ring. Probably stimulates Z-ring formation, perhaps through the cross-linking of FtsZ protofilaments. Its function overlaps with FtsA. The protein is Cell division protein SepF of Trichormus variabilis (strain ATCC 29413 / PCC 7937) (Anabaena variabilis).